A 511-amino-acid chain; its full sequence is MALSNTLSLSSSKSLVQSHLLHNPLPQPRFSLFPTTQHGRRHPISAVHAAEPSKTAVKQGKWSLDSWKTKKALQLPEYPDEKELESVLKTLEMNPPLVFAGEARSLEEKLGEAALGKAFLLQGGDCAESFKEFNANNIRDTFRILLQMSVVLMFGGQVPVIKVGRMAGQFAKPRSDPLEEINGVKLPSYKGDNINGDTFDEKSRIPDPHRLIRAYMQSAATLNLLRAFATGGYAAMQRVTEWNLDFVENCEQGDRYQELAHRVDEALGFMAAAGLTVDHPIMSTTDFWTSHECLLLPYEQALTREDSTSGLFYDCSAHMVWVGERTRQLDGAHVEFLRGVANPLGIKVSQKMDPNELIKLIDILNPANKPGRITVIVRMGAENMRVKLSHLVRAVRGAGQIVTWVCDPMHGNTIKAPCGLKTRAFDSILAEVRAFFDVHEQEGSHPGGIHLEMTGQNVTECIGGSRTVTYDDLGSRYHTHCDPRLNASQSLELSFIVAERLRRRRMSTQRL.

This sequence belongs to the class-II DAHP synthase family. In terms of tissue distribution, leaves, stems, tuber and roots.

It localises to the plastid. It is found in the chloroplast. The catalysed reaction is D-erythrose 4-phosphate + phosphoenolpyruvate + H2O = 7-phospho-2-dehydro-3-deoxy-D-arabino-heptonate + phosphate. It participates in metabolic intermediate biosynthesis; chorismate biosynthesis; chorismate from D-erythrose 4-phosphate and phosphoenolpyruvate: step 1/7. The polypeptide is Phospho-2-dehydro-3-deoxyheptonate aldolase 2, chloroplastic (SHKB) (Solanum tuberosum (Potato)).